A 111-amino-acid polypeptide reads, in one-letter code: Pyrimidine/purine nucleoside phosphorylase 1 (111 aa).

The protein belongs to the nucleoside phosphorylase PpnP family.

The catalysed reaction is a purine D-ribonucleoside + phosphate = a purine nucleobase + alpha-D-ribose 1-phosphate. The enzyme catalyses adenosine + phosphate = alpha-D-ribose 1-phosphate + adenine. It catalyses the reaction cytidine + phosphate = cytosine + alpha-D-ribose 1-phosphate. It carries out the reaction guanosine + phosphate = alpha-D-ribose 1-phosphate + guanine. The catalysed reaction is inosine + phosphate = alpha-D-ribose 1-phosphate + hypoxanthine. The enzyme catalyses thymidine + phosphate = 2-deoxy-alpha-D-ribose 1-phosphate + thymine. It catalyses the reaction uridine + phosphate = alpha-D-ribose 1-phosphate + uracil. It carries out the reaction xanthosine + phosphate = alpha-D-ribose 1-phosphate + xanthine. Catalyzes the phosphorolysis of diverse nucleosides, yielding D-ribose 1-phosphate and the respective free bases. Can use uridine, adenosine, guanosine, cytidine, thymidine, inosine and xanthosine as substrates. Also catalyzes the reverse reactions. The protein is Pyrimidine/purine nucleoside phosphorylase 1 of Psychrobacter cryohalolentis (strain ATCC BAA-1226 / DSM 17306 / VKM B-2378 / K5).